The chain runs to 551 residues: E3 ubiquitin-protein ligase HEL1 (551 aa).

The tract at residues 175-388 is TRIAD supradomain; it reads NDFTCIICCD…KNFFQCTMYK (214 aa). Residues Cys179, Cys182, Cys200, Cys203, Cys301, Cys304, His309, Cys314, Cys341, and Cys344 each coordinate Zn(2+). An RING-type 1 zinc finger spans residues 179–225; it reads CIICCDKKDTETFALECGHEYCINCYRHYIKDKLHEGNIITCMDCSL. The segment at 242 to 314 adopts an IBR-type zinc-finger fold; it reads SKLMDSSIKS…GFEVHSPADC (73 aa). The segment at 341-370 adopts an RING-type 2; atypical zinc-finger fold; the sequence is CPKCSVNIEKNGGCNHMVCSSCKYEFCWIC. Cys354 is an active-site residue. Positions 359, 362, 367, 370, 377, and 384 each coordinate Zn(2+).

The protein belongs to the RBR family. In terms of assembly, interacts with the E2 ubiquitin-conjugating enzyme UBC4 and histones H3 and H4.

It carries out the reaction [E2 ubiquitin-conjugating enzyme]-S-ubiquitinyl-L-cysteine + [acceptor protein]-L-lysine = [E2 ubiquitin-conjugating enzyme]-L-cysteine + [acceptor protein]-N(6)-ubiquitinyl-L-lysine.. It functions in the pathway protein modification; protein ubiquitination. In terms of biological role, probable ubiquitin-protein ligase involved in the degradation-related ubiquitination of histones. Contributes to the post-translational regulation of histone protein levels by polyubiquitination of excess histones for subsequent degradation. The protein is E3 ubiquitin-protein ligase HEL1 of Saccharomyces cerevisiae (strain ATCC 204508 / S288c) (Baker's yeast).